We begin with the raw amino-acid sequence, 658 residues long: Transmembrane 9 superfamily member 11 (658 aa).

Residues 1 to 23 (MRSMDRFGIWVLAILLVIQSSFG) form the signal peptide. Over 24-291 (FYLPGSYPHK…LKMEGSKVHW (268 aa)) the chain is Lumenal. The helical transmembrane segment at 292–312 (FSILNSLMVITFLAGIVLVIF) threads the bilayer. Over 313 to 364 (LRTVRRDLTRYEELDKEAQAQMNEELSGWKLVVGDVFRAPSNASLLCVMVGD) the chain is Cytoplasmic. The helical transmembrane segment at 365–385 (GVQILGMAVVTILFAALGFMS) threads the bilayer. Topologically, residues 386–391 (PASRGT) are lumenal. Residues 392 to 412 (LITGMLFFYMILGIAAGYVSV) traverse the membrane as a helical segment. Residues 413-432 (RLWRTIGCGEHRGWMSVAWK) are Cytoplasmic-facing. Residues 433-453 (AACFFPGIAFLILTTLNFLLW) traverse the membrane as a helical segment. The Lumenal segment spans residues 454-462 (GSHSTGAIP). The chain crosses the membrane as a helical span at residues 463–483 (FSLFVILLLLWFCISVPLTLI). Over 484 to 515 (GGYFGAKAPHIEFPVRTNQIPREIPAQKYPSW) the chain is Cytoplasmic. Residues 516–536 (LLVLGAGTLPFGTLFIELFFI) traverse the membrane as a helical segment. Residues 537–547 (MSSIWMGRVYY) lie on the Lumenal side of the membrane. The helical transmembrane segment at 548–568 (VFGFLFVVLILLVVVCAEVSL) threads the bilayer. Over 569–586 (VLTYMHLCVEDYKWWWKS) the chain is Cytoplasmic. The chain crosses the membrane as a helical span at residues 587 to 607 (FFASGSVAIYIFIYSINYLVF). Residues 608–619 (DLKSLSGPVSAT) lie on the Lumenal side of the membrane. The chain crosses the membrane as a helical span at residues 620–640 (LYLGYSLFMVLAIMLATGTVG). Over 641–658 (FLSSFWFVHYLFSSVKLD) the chain is Cytoplasmic. The short motif at 647-652 (FVHYLF) is the Endoplasmic reticulum export signal element. A Golgi retention signal motif is present at residues 656–658 (KLD).

This sequence belongs to the nonaspanin (TM9SF) (TC 9.A.2) family.

The protein localises to the endosome membrane. The protein resides in the golgi apparatus membrane. The polypeptide is Transmembrane 9 superfamily member 11 (Arabidopsis thaliana (Mouse-ear cress)).